We begin with the raw amino-acid sequence, 890 residues long: DNA mismatch repair protein MutS (890 aa).

645–652 (GPNMAGKS) provides a ligand contact to ATP.

The protein belongs to the DNA mismatch repair MutS family.

Functionally, this protein is involved in the repair of mismatches in DNA. It is possible that it carries out the mismatch recognition step. This protein has a weak ATPase activity. This Rickettsia conorii (strain ATCC VR-613 / Malish 7) protein is DNA mismatch repair protein MutS.